Here is a 798-residue protein sequence, read N- to C-terminus: Integrin beta-1 (798 aa).

A signal peptide spans 1-20 (MNLQLIFWIGLISSVCCVFG). At 21-728 (QADEDRCLKA…ETPECPTGPD (708 aa)) the chain is on the extracellular side. Positions 26–76 (RCLKANAKSCGECIQAGPNCGWCTNSTFLQEGMPTSARCDDLEALKKKGCH) constitute a PSI domain. Disulfide bonds link Cys-27-Cys-45, Cys-35-Cys-464, Cys-38-Cys-64, Cys-48-Cys-75, Cys-207-Cys-213, Cys-261-Cys-301, Cys-401-Cys-415, Cys-435-Cys-462, Cys-466-Cys-486, Cys-477-Cys-489, Cys-491-Cys-500, Cys-502-Cys-533, Cys-516-Cys-531, Cys-525-Cys-536, Cys-538-Cys-553, Cys-555-Cys-576, Cys-560-Cys-574, Cys-568-Cys-579, Cys-581-Cys-590, Cys-592-Cys-615, Cys-599-Cys-613, Cys-607-Cys-618, Cys-620-Cys-630, Cys-633-Cys-636, Cys-640-Cys-691, Cys-646-Cys-665, Cys-649-Cys-661, and Cys-699-Cys-723. A compositionally biased stretch (basic and acidic residues) spans 75–91 (CHPNDTENPRGSKDIKK). The disordered stretch occupies residues 75–105 (CHPNDTENPRGSKDIKKNKNVTNRSKGTAEK). Residues Asn-94 and Asn-97 are each glycosylated (N-linked (GlcNAc...) asparagine). Residues 140-378 (DYPIDLYYLM…QLIIDAYNSL (239 aa)) enclose the VWFA domain. Mg(2+)-binding residues include Ser-152 and Ser-154. Ca(2+) is bound by residues Ser-154, Asp-157, Asp-158, and Glu-189. The interval 207–213 (CTNEQNC) is CX3CL1-binding. Asn-212 carries an N-linked (GlcNAc...) asparagine glycan. Residues Asn-244, Asp-246, Pro-248, and Glu-249 each contribute to the Ca(2+) site. Glu-249 contacts Mg(2+). Asn-269 carries N-linked (GlcNAc...) asparagine glycosylation. The interval 295–314 (LPNDGQCHLKNDVYTMSHYY) is CX3CL1-binding. Residue Ala-362 coordinates Ca(2+). The tract at residues 383 to 465 (ILENSKLPEG…IILQFICECE (83 aa)) is interaction with TMEM182. Asn-406 and Asn-417 each carry an N-linked (GlcNAc...) asparagine glycan. I-EGF domains are found at residues 466 to 501 (CQGEGIPGSPKCHDGNGTFECGACRCNEGRVGRHCE), 502 to 554 (CSTD…KFCE), 555 to 591 (CDNFNCDRSNGLICGGNGVCKCRVCECNPNYTGSACD), and 592 to 631 (CSLDTTSCMAVNGQICNGRGVCECGACKCTDPKFQGPTCE). An N-linked (GlcNAc...) asparagine glycan is attached at Asn-481. Asn-520 is a glycosylation site (N-linked (GlcNAc...) asparagine). Residue Asn-584 is glycosylated (N-linked (GlcNAc...) asparagine). Asn-669 carries N-linked (GlcNAc...) asparagine glycosylation. Residues 729–749 (IIPIVAGVVAGIVLIGLALLL) form a helical membrane-spanning segment. Over 750 to 798 (IWKLLMIIHDRREFAKFEKERMNAKWDTGENPIYKSAVTTVVNPKYEGK) the chain is Cytoplasmic. Positions 762 to 767 (EFAKFE) are signal for sorting from recycling endosomes; interaction with ACAP1. Thr-777 bears the Phosphothreonine mark. Phosphotyrosine is present on Tyr-783. A Phosphoserine modification is found at Ser-785. The interaction with ITGB1BP1 stretch occupies residues 785 to 792 (SAVTTVVN). Thr-789 is modified (phosphothreonine). Position 794 is an N6-acetyllysine; alternate (Lys-794). A Glycyl lysine isopeptide (Lys-Gly) (interchain with G-Cter in SUMO1); alternate cross-link involves residue Lys-794.

The protein belongs to the integrin beta chain family. Interacts with seprase FAP (seprase); the interaction occurs at the cell surface of invadopodia membrane in a collagen-dependent manner. Heterodimer of an alpha and a beta subunit. Beta-1 associates with either alpha-1, alpha-2, alpha-3, alpha-4, alpha-5, alpha-6, alpha-7, alpha-8, alpha-9, alpha-10, alpha-11 or alpha-V. ITGA6:ITGB1 is found in a complex with CD9; interaction takes place in oocytes and is involved in sperm-egg fusion. Binds LGALS3BP and NMRK2, when associated with alpha-7, but not with alpha-5. Interacts with FLNA, FLNB, FLNC and RANBP9. Interacts with KRT1 in the presence of RACK1 and SRC. Interacts with JAML; integrin alpha-4/beta-1 may regulate leukocyte to endothelial cells adhesion by controlling JAML homodimerization. Interacts with RAB21. Interacts (via the cytoplasmic region) with RAB25 (via the hypervariable C-terminal region). Interacts with MYO10. Interacts with ITGB1BP1 (via C-terminal region); the interaction is a prerequisite for focal adhesion disassembly. Interacts with TLN1; the interaction is prevented by competitive binding of ITGB1BP1. Interacts with ACAP1; required for ITGB1 recycling. Interacts with ASAP3. Interacts with FERMT2; the interaction is inhibited in presence of ITGB1BP1. Interacts with DAB2. Interacts with FGR and HCK. Interacts with alpha-7A and alpha-7B in adult skeletal muscle. Interacts with alpha-7B in cardiomyocytes of adult heart. Interacts with EMP2; the interaction may be direct or indirect and ITGB1 has a heterodimer form. ITGA5:ITGB1 interacts with CCN3. ITGA4:ITGB1 is found in a ternary complex with CX3CR1 and CX3CL1. ITGA5:ITGB1 interacts with FBN1. ITGA5:ITGB1 acts as a receptor for fibronectin FN1 and mediates R-G-D-dependent cell adhesion to FN1. ITGA5:ITGB1 interacts with IL1B. Interacts with MDK. ITGA4:ITGB1 interacts with MDK; this interaction mediates MDK-induced osteoblast cells migration through PXN phosphorylation. ITGA6:ITGB1 interacts with MDK; this interaction mediates MDK-induced neurite-outgrowth. ITGA5:ITGB1 interacts with ACE2. Interacts with TMEM182 and LAMB1. Interacts with tensin TNS3; TNS3 also interacts with PEAK1, thus acting as an adapter molecule to bridge the association of PEAK1 with ITGB1. Interacts with tensin TNS4; the interaction displaces tensin TNS3 from the ITGB1 cytoplasmic tail and promotes ITGB1 stability. Integrin ITGA9:ITGB1 interacts with SPP1/OPN (via N-terminus). Integrin ITGA9:ITGB1 interacts with TNC/TNFN3 (via the 3rd Fibronectin type-III domain). Integrins ITGA4:ITGB1 and ITGA9:ITGB1 interact with SVEP1 (via Sushi domain 21); thereby inhibit Ca(2+) intracellular signaling and as a result repress vasocontraction. ITGA4:ITGB1 and ITGA5:ITGB1 interacts with SELP. Interacts with CD248. ITGA5:ITGB1 interacts with IGFBP1. ITGA4:ITGB1 interacts with BCAM. Interacts with ADGRG6.

The protein localises to the cell membrane. Its subcellular location is the cell projection. The protein resides in the invadopodium membrane. It is found in the ruffle membrane. It localises to the recycling endosome. The protein localises to the melanosome. Its subcellular location is the cell junction. The protein resides in the focal adhesion. It is found in the lamellipodium. It localises to the ruffle. In terms of biological role, integrins alpha-1/beta-1, alpha-2/beta-1, alpha-10/beta-1 and alpha-11/beta-1 are receptors for collagen. Integrins alpha-1/beta-1 and alpha-2/beta-2 recognize the proline-hydroxylated sequence G-F-P-G-E-R in collagen. Integrins alpha-2/beta-1, alpha-3/beta-1, alpha-4/beta-1, alpha-5/beta-1, alpha-8/beta-1, alpha-10/beta-1, alpha-11/beta-1 and alpha-V/beta-1 are receptors for fibronectin. Alpha-4/beta-1 recognizes one or more domains within the alternatively spliced CS-1 and CS-5 regions of fibronectin. Integrin alpha-5/beta-1 is a receptor for fibrinogen. Integrin alpha-1/beta-1, alpha-2/beta-1, alpha-6/beta-1 and alpha-7/beta-1 are receptors for lamimin. Integrin alpha-6/beta-1 (ITGA6:ITGB1) is present in oocytes and is involved in sperm-egg fusion. Integrin alpha-4/beta-1 is a receptor for VCAM1 and recognizes the sequence Q-I-D-S in VCAM1. Integrin alpha-9/beta-1 is a receptor for VCAM1, cytotactin and osteopontin. It recognizes the sequence A-E-I-D-G-I-E-L in cytotactin. Integrin alpha-3/beta-1 is a receptor for epiligrin, thrombospondin and CSPG4. Integrin alpha-3/beta-1 provides a docking site for FAP (seprase) at invadopodia plasma membranes in a collagen-dependent manner and hence may participate in the adhesion, formation of invadopodia and matrix degradation processes, promoting cell invasion. Alpha-3/beta-1 may mediate with LGALS3 the stimulation by CSPG4 of endothelial cells migration. Integrin alpha-V/beta-1 is a receptor for vitronectin. Beta-1 integrins recognize the sequence R-G-D in a wide array of ligands. When associated with alpha-7/beta-1 integrin, regulates cell adhesion and laminin matrix deposition. Involved in promoting endothelial cell motility and angiogenesis. Involved in osteoblast compaction through the fibronectin fibrillogenesis cell-mediated matrix assembly process and the formation of mineralized bone nodules. May be involved in up-regulation of the activity of kinases such as PKC via binding to KRT1. Together with KRT1 and RACK1, serves as a platform for SRC activation or inactivation. Plays a mechanistic adhesive role during telophase, required for the successful completion of cytokinesis. ITGA4:ITGB1 binds to fractalkine (CX3CL1) and may act as its coreceptor in CX3CR1-dependent fractalkine signaling. ITGA4:ITGB1 and ITGA5:ITGB1 bind to PLA2G2A via a site (site 2) which is distinct from the classical ligand-binding site (site 1) and this induces integrin conformational changes and enhanced ligand binding to site 1. ITGA5:ITGB1 acts as a receptor for fibrillin-1 (FBN1) and mediates R-G-D-dependent cell adhesion to FBN1. ITGA5:ITGB1 is a receptor for IL1B and binding is essential for IL1B signaling. ITGA5:ITGB3 is a receptor for soluble CD40LG and is required for CD40/CD40LG signaling. Plays an important role in myoblast differentiation and fusion during skeletal myogenesis. ITGA9:ITGB1 may play a crucial role in SVEP1/polydom-mediated myoblast cell adhesion. Integrins ITGA9:ITGB1 and ITGA4:ITGB1 repress PRKCA-mediated L-type voltage-gated channel Ca(2+) influx and ROCK-mediated calcium sensitivity in vascular smooth muscle cells via their interaction with SVEP1, thereby inhibit vasocontraction. In Camelus bactrianus (Bactrian camel), this protein is Integrin beta-1.